Consider the following 238-residue polypeptide: Ribonuclease PH (238 aa).

Residues R87 and 125 to 127 (GTR) each bind phosphate.

Belongs to the RNase PH family. In terms of assembly, homohexameric ring arranged as a trimer of dimers.

The catalysed reaction is tRNA(n+1) + phosphate = tRNA(n) + a ribonucleoside 5'-diphosphate. In terms of biological role, phosphorolytic 3'-5' exoribonuclease that plays an important role in tRNA 3'-end maturation. Removes nucleotide residues following the 3'-CCA terminus of tRNAs; can also add nucleotides to the ends of RNA molecules by using nucleoside diphosphates as substrates, but this may not be physiologically important. Probably plays a role in initiation of 16S rRNA degradation (leading to ribosome degradation) during starvation. In Synechococcus elongatus (strain ATCC 33912 / PCC 7942 / FACHB-805) (Anacystis nidulans R2), this protein is Ribonuclease PH.